A 98-amino-acid chain; its full sequence is Large ribosomal subunit protein uL23 (98 aa).

The protein belongs to the universal ribosomal protein uL23 family. Part of the 50S ribosomal subunit. Contacts protein L29, and trigger factor when it is bound to the ribosome.

In terms of biological role, one of the early assembly proteins it binds 23S rRNA. One of the proteins that surrounds the polypeptide exit tunnel on the outside of the ribosome. Forms the main docking site for trigger factor binding to the ribosome. The chain is Large ribosomal subunit protein uL23 from Rickettsia africae (strain ESF-5).